A 77-amino-acid polypeptide reads, in one-letter code: Small ribosomal subunit protein bS20 (77 aa).

Positions 47–77 (ASSSIDKAESKGLIHKNKASRDKARLAAKLG) are disordered.

Belongs to the bacterial ribosomal protein bS20 family.

Binds directly to 16S ribosomal RNA. This Streptococcus pyogenes serotype M1 protein is Small ribosomal subunit protein bS20.